Consider the following 80-residue polypeptide: uncharacterized protein (80 aa).

2 consecutive transmembrane segments (helical) span residues 15 to 35 (ALGLTLLYLAVWLVAAYLSGV) and 45 to 65 (WFEMACILTPLLFIGLCWAMV).

The protein to H.influenzae HI_0974B.

The protein localises to the cell membrane. This is an uncharacterized protein from Escherichia coli (strain K12).